The primary structure comprises 273 residues: Glutamate 5-kinase (273 aa).

An ATP-binding site is contributed by lysine 15. The substrate site is built by serine 55, aspartate 142, and asparagine 158. ATP contacts are provided by residues 178–179 and 220–226; these read SD and TGGMLSK.

This sequence belongs to the glutamate 5-kinase family.

The protein localises to the cytoplasm. It carries out the reaction L-glutamate + ATP = L-glutamyl 5-phosphate + ADP. Its pathway is amino-acid biosynthesis; L-proline biosynthesis; L-glutamate 5-semialdehyde from L-glutamate: step 1/2. Its function is as follows. Catalyzes the transfer of a phosphate group to glutamate to form L-glutamate 5-phosphate. This chain is Glutamate 5-kinase, found in Streptococcus pyogenes serotype M1.